Reading from the N-terminus, the 319-residue chain is Lipoyl synthase (319 aa).

The disordered stretch occupies residues 1–32 (MVVLVDTVSSTPVRPRHPEKAARPDSLSPKKP). The span at 16–32 (RHPEKAARPDSLSPKKP) shows a compositional bias: basic and acidic residues. [4Fe-4S] cluster contacts are provided by C61, C66, C72, C87, C91, C94, and S300. A Radical SAM core domain is found at 73 to 289 (WDKKHATFMI…GKTAYAKGFL (217 aa)).

The protein belongs to the radical SAM superfamily. Lipoyl synthase family. It depends on [4Fe-4S] cluster as a cofactor.

It localises to the cytoplasm. It carries out the reaction [[Fe-S] cluster scaffold protein carrying a second [4Fe-4S](2+) cluster] + N(6)-octanoyl-L-lysyl-[protein] + 2 oxidized [2Fe-2S]-[ferredoxin] + 2 S-adenosyl-L-methionine + 4 H(+) = [[Fe-S] cluster scaffold protein] + N(6)-[(R)-dihydrolipoyl]-L-lysyl-[protein] + 4 Fe(3+) + 2 hydrogen sulfide + 2 5'-deoxyadenosine + 2 L-methionine + 2 reduced [2Fe-2S]-[ferredoxin]. It functions in the pathway protein modification; protein lipoylation via endogenous pathway; protein N(6)-(lipoyl)lysine from octanoyl-[acyl-carrier-protein]: step 2/2. Its function is as follows. Catalyzes the radical-mediated insertion of two sulfur atoms into the C-6 and C-8 positions of the octanoyl moiety bound to the lipoyl domains of lipoate-dependent enzymes, thereby converting the octanoylated domains into lipoylated derivatives. This chain is Lipoyl synthase, found in Rhodopseudomonas palustris (strain BisB5).